A 142-amino-acid chain; its full sequence is Baculoviral IAP repeat-containing protein 5 (142 aa).

The BIR repeat unit spans residues 18–88; the sequence is RISTFKNWPF…KHSSGCAFLS (71 aa). Ser20 is subject to Phosphoserine; by AURKC. Residue Lys23 is modified to N6-acetyllysine. Thr34 is subject to Phosphothreonine; by CDK1 and CDK15. Residue Thr48 is modified to Phosphothreonine. Cys57, Cys60, His77, and Cys84 together coordinate Zn(2+). N6-acetyllysine is present on residues Lys90, Lys110, Lys112, and Lys115. Thr117 carries the post-translational modification Phosphothreonine; by AURKB. N6-acetyllysine is present on Lys129.

Belongs to the IAP family. As to quaternary structure, monomer or homodimer. Exists as a homodimer in the apo state and as a monomer in the CPC-bound state. The monomer protects cells against apoptosis more efficiently than the dimer. Only the dimeric form is capable of enhancing tubulin stability in cells. When phosphorylated, interacts with LAMTOR5/HBXIP; the resulting complex binds pro-CASP9, as well as active CASP9, but much less efficiently. Component of the chromosomal passenger complex (CPC) composed of at least BIRC5/survivin, CDCA8/borealin, INCENP, AURKB or AURKC; in the complex forms a triple-helix bundle-based subcomplex with INCENP and CDCA8. Interacts with JTB. Interacts (via BIR domain) with histone H3 phosphorylated at 'Thr-3' (H3pT3). Interacts with EVI5. Interacts with GTP-bound RAN in both the S and M phases of the cell cycle. Interacts with USP9X. Interacts with tubulin. Interacts with BIRC2/c-IAP1. The acetylated form at Lys-129 interacts with STAT3. The monomeric form deacetylated at Lys-129 interacts with XPO1/CRM1. The monomeric form interacts with XIAP/BIRC4. Both the dimeric and monomeric form can interact with DIABLO/SMAC. Interacts with BIRC6/bruce. Interacts with FBXL7; this interaction facilitates the polyubiquitination and subsequent proteasomal degradation of BIRC5 by the SCF(FBXL7) E3 ubiquitin-protein ligase complex. Post-translationally, ubiquitinated by the Cul9-RING ubiquitin-protein ligase complex, leading to its degradation. Ubiquitination is required for centrosomal targeting. Deubiquitinated by USP35 or USP38; leading to stabilization. In terms of processing, acetylation at Lys-129 results in its homodimerization, while deacetylation promotes the formation of monomers which heterodimerize with XPO1/CRM1 which facilitates its nuclear export. The acetylated form represses STAT3 transactivation. The dynamic equilibrium between its acetylation and deacetylation at Lys-129 determines its interaction with XPO1/CRM1, its subsequent subcellular localization, and its ability to inhibit STAT3 transactivation. In vitro phosphorylation at Thr-117 by AURKB prevents interaction with INCENP and localization to mitotic chromosomes. Phosphorylation at Thr-48 by CK2 is critical for its mitotic and anti-apoptotic activities. Phosphorylation at Thr-34 by CDK15 is critical for its anti-apoptotic activity. Phosphorylation at Ser-20 by AURKC is critical for regulation of proper chromosome alignment and segregation, and possibly cytokinesis.

It is found in the cytoplasm. It localises to the nucleus. The protein localises to the chromosome. Its subcellular location is the centromere. The protein resides in the cytoskeleton. It is found in the spindle. It localises to the kinetochore. The protein localises to the midbody. In terms of biological role, multitasking protein that has dual roles in promoting cell proliferation and preventing apoptosis. Component of a chromosome passage protein complex (CPC) which is essential for chromosome alignment and segregation during mitosis and cytokinesis. Acts as an important regulator of the localization of this complex; directs CPC movement to different locations from the inner centromere during prometaphase to midbody during cytokinesis and participates in the organization of the center spindle by associating with polymerized microtubules. Involved in the recruitment of CPC to centromeres during early mitosis via association with histone H3 phosphorylated at 'Thr-3' (H3pT3) during mitosis. The complex with RAN plays a role in mitotic spindle formation by serving as a physical scaffold to help deliver the RAN effector molecule TPX2 to microtubules. May counteract a default induction of apoptosis in G2/M phase. The acetylated form represses STAT3 transactivation of target gene promoters. May play a role in neoplasia. Inhibitor of CASP3 and CASP7. Essential for the maintenance of mitochondrial integrity and function. This is Baculoviral IAP repeat-containing protein 5 (BIRC5) from Felis catus (Cat).